An 81-amino-acid polypeptide reads, in one-letter code: MDSLTAAASVIAAALAVGLAAIGPGIGQGNAAGSAAEGIARQPEAEGKIRGTLLLSLAFMEALTIYGLVVALVLLFANPFA.

2 consecutive transmembrane segments (helical) span residues 6–26 and 57–77; these read AAASVIAAALAVGLAAIGPGI and LAFMEALTIYGLVVALVLLFA.

Belongs to the ATPase C chain family. F-type ATPases have 2 components, F(1) - the catalytic core - and F(0) - the membrane proton channel. F(1) has five subunits: alpha(3), beta(3), gamma(1), delta(1), epsilon(1). F(0) has four main subunits: a(1), b(1), b'(1) and c(10-14). The alpha and beta chains form an alternating ring which encloses part of the gamma chain. F(1) is attached to F(0) by a central stalk formed by the gamma and epsilon chains, while a peripheral stalk is formed by the delta, b and b' chains.

The protein localises to the cellular thylakoid membrane. In terms of biological role, f(1)F(0) ATP synthase produces ATP from ADP in the presence of a proton or sodium gradient. F-type ATPases consist of two structural domains, F(1) containing the extramembraneous catalytic core and F(0) containing the membrane proton channel, linked together by a central stalk and a peripheral stalk. During catalysis, ATP synthesis in the catalytic domain of F(1) is coupled via a rotary mechanism of the central stalk subunits to proton translocation. Key component of the F(0) channel; it plays a direct role in translocation across the membrane. A homomeric c-ring of between 10-14 subunits forms the central stalk rotor element with the F(1) delta and epsilon subunits. In Picosynechococcus sp. (strain ATCC 27264 / PCC 7002 / PR-6) (Agmenellum quadruplicatum), this protein is ATP synthase subunit c.